We begin with the raw amino-acid sequence, 384 residues long: Aryl-alcohol dehydrogenase GME11368 (384 aa).

D69 lines the NADP(+) pocket. The active-site Proton donor is the Y74. Residues 177 to 178 (SD), Q203, and 301 to 309 (RKPEHLKAN) each bind NADP(+).

It belongs to the aldo/keto reductase family. Aldo/keto reductase 2 subfamily.

It functions in the pathway secondary metabolite biosynthesis. Aryl-alcohol dehydrogenase; part of the gene cluster that mediates the biosynthesis of dibenzodioxocinones such as pestalotiollide B, a novel class of inhibitors against cholesterol ester transfer protein (CEPT). The biosynthesis initiates from condensation of acetate and malonate units catalyzed by the non-reducing PKS pks8/GME11356. Pks8/GME11356 lacks a thioesterase (TE) domain, which is important to the cyclizing of the third ring of atrochrysone carboxylic acid, and the esterase GME11355 might play the role of TE and catalyzes the cyclization reaction of the C ring. The lactamase-like protein GME11357 (or other beta-lactamases in Pestalotiopsis microspora) probably hydrolyzes the thioester bond between the ACP of pks8/GME11356 and the intermediate to release atrochrysone carboxylic acid, which is spontaneously dehydrates to form endocrocin anthrone. Endocrocin anthrone is further converted to emodin via the endocrocin intermediate. Emodin is then oxidized by several enzymes such as the Baeyer-Villiger oxidase GME11358, the oxidoreductase GME11367, the short chain dehydrogenase/reductase GME11373, as well as by other oxidoreductases from the cluster, to modify the A and C rings and open the B ring, and finally yield monodictyphenone. The prenyltransferase GME11375 may catalyze the addition reaction between the C5 side chains and the carbon bone of dibenzodioxocinones. The remaining biochemical reactions to the final product dibenzodioxocinones should be methylation catalyzed by methyltransferase GME11366 and reduction and lactonization reaction catalyzed by a series of oxidordeuctases. In Pestalotiopsis microspora, this protein is Aryl-alcohol dehydrogenase GME11368.